Reading from the N-terminus, the 737-residue chain is Polyribonucleotide nucleotidyltransferase (737 aa).

2 residues coordinate Mg(2+): Asp-514 and Asp-520. The 60-residue stretch at 580–639 (PRIITVKIPVDKIGEVIGPKGKMINQIQEDTGADITIEDDGTIYIGAQAGSQAEAARATI) folds into the KH domain. Residues 651–723 (GERYLGTVVK…SRGKLSLIPV (73 aa)) form the S1 motif domain.

It belongs to the polyribonucleotide nucleotidyltransferase family. Requires Mg(2+) as cofactor.

It localises to the cytoplasm. It carries out the reaction RNA(n+1) + phosphate = RNA(n) + a ribonucleoside 5'-diphosphate. In terms of biological role, involved in mRNA degradation. Catalyzes the phosphorolysis of single-stranded polyribonucleotides processively in the 3'- to 5'-direction. The protein is Polyribonucleotide nucleotidyltransferase of Streptomyces griseus subsp. griseus (strain JCM 4626 / CBS 651.72 / NBRC 13350 / KCC S-0626 / ISP 5235).